The following is a 104-amino-acid chain: L-rhamnose mutarotase (104 aa).

Tyrosine 18 serves as a coordination point for substrate. Catalysis depends on histidine 22, which acts as the Proton donor. Substrate is bound by residues tyrosine 41 and 76–77; that span reads WW.

This sequence belongs to the rhamnose mutarotase family. As to quaternary structure, homodimer.

Its subcellular location is the cytoplasm. The enzyme catalyses alpha-L-rhamnose = beta-L-rhamnose. The protein operates within carbohydrate metabolism; L-rhamnose metabolism. In terms of biological role, involved in the anomeric conversion of L-rhamnose. This Tolumonas auensis (strain DSM 9187 / NBRC 110442 / TA 4) protein is L-rhamnose mutarotase.